The sequence spans 563 residues: Efflux pump notK (563 aa).

The tract at residues 1–32 (MTKDEDSGTTDGGYSTPDIAVQEKQDQPPAPE) is disordered. The next 14 membrane-spanning stretches (helical) occupy residues 48-68 (IFLS…AIPG), 78-98 (DVGW…PMWG), 108-128 (LVYL…AAAP), 138-158 (ALQG…ISYV), 165-185 (AMLI…GPLL), 197-217 (WCFW…VLFF), 239-259 (LPGF…LQWG), 270-290 (VIAT…VEWI), 312-332 (LYGW…PIYF), 345-365 (VNSL…GFLI), 374-394 (YEFA…TLDI), 406-426 (VIFG…LESF), 438-458 (VMLM…QSIF), and 509-529 (VFAF…AIPF). The disordered stretch occupies residues 538–563 (GPSNGQEEEEGKKDGPAEKKEDEVAV). A compositionally biased stretch (basic and acidic residues) spans 547–563 (EGKKDGPAEKKEDEVAV).

Belongs to the major facilitator superfamily. TCR/Tet family.

It localises to the cell membrane. In terms of biological role, efflux pump; part of the gene cluster that mediates the biosynthesis of notoamide, a fungal indole alkaloid that belongs to a family of natural products containing a characteristic bicyclo[2.2.2]diazaoctane core. This is Efflux pump notK from Aspergillus sp. (strain MF297-2).